A 607-amino-acid polypeptide reads, in one-letter code: Isocitrate dehydrogenase kinase/phosphatase (607 aa).

ATP contacts are provided by residues 328-334 and lysine 349; that span reads APGIKGL. Residue aspartate 384 is part of the active site.

The protein belongs to the AceK family.

Its subcellular location is the cytoplasm. The catalysed reaction is L-seryl-[isocitrate dehydrogenase] + ATP = O-phospho-L-seryl-[isocitrate dehydrogenase] + ADP + H(+). Its function is as follows. Bifunctional enzyme which can phosphorylate or dephosphorylate isocitrate dehydrogenase (IDH) on a specific serine residue. This is a regulatory mechanism which enables bacteria to bypass the Krebs cycle via the glyoxylate shunt in response to the source of carbon. When bacteria are grown on glucose, IDH is fully active and unphosphorylated, but when grown on acetate or ethanol, the activity of IDH declines drastically concomitant with its phosphorylation. The chain is Isocitrate dehydrogenase kinase/phosphatase from Cupriavidus metallidurans (strain ATCC 43123 / DSM 2839 / NBRC 102507 / CH34) (Ralstonia metallidurans).